A 154-amino-acid polypeptide reads, in one-letter code: Protein X (154 aa).

Residues 68-117 (PCALRFTSARRMETTVNAHQILPKVLHKRTLGLPAMSTTDLEAYFKDCVF) form a mitochondrial targeting sequence region.

It belongs to the orthohepadnavirus protein X family. As to quaternary structure, may form homodimer. May interact with host CEBPA, CFLAR, CREB1, DDB1, E4F1, HBXIP, HSPD1/HSP60, NFKBIA, POLR2E and SMAD4. Interacts with host SMC5-SMC6 complex and induces its degradation. Interacts with host TRPC4AP; leading to prevent ubiquitination of TRPC4AP. Interacts with host PLSCR1; this interaction promotes ubiquitination and degradation of HBx and impairs HBx-mediated cell proliferation. In terms of processing, a fraction may be phosphorylated in insect cells and HepG2 cells, a human hepatoblastoma cell line. Phosphorylated in vitro by host protein kinase C or mitogen-activated protein kinase. N-acetylated in insect cells.

The protein localises to the host cytoplasm. It localises to the host nucleus. The protein resides in the host mitochondrion. Functionally, multifunctional protein that plays a role in silencing host antiviral defenses and promoting viral transcription. Does not seem to be essential for HBV infection. May be directly involved in development of cirrhosis and liver cancer (hepatocellular carcinoma). Most of cytosolic activities involve modulation of cytosolic calcium. The effect on apoptosis is controversial depending on the cell types in which the studies have been conducted. May induce apoptosis by localizing in mitochondria and causing loss of mitochondrial membrane potential. May also modulate apoptosis by binding host CFLAR, a key regulator of the death-inducing signaling complex (DISC). Promotes viral transcription by using the host E3 ubiquitin ligase DDB1 to target the SMC5-SMC6 complex to proteasomal degradation. This host complex would otherwise bind to viral episomal DNA, and prevents its transcription. Moderately stimulates transcription of many different viral and cellular transcription elements. Promoters and enhancers stimulated by HBx contain DNA binding sites for NF-kappa-B, AP-1, AP-2, c-EBP, ATF/CREB, or the calcium-activated factor NF-AT. The chain is Protein X from Homo sapiens (Human).